A 268-amino-acid chain; its full sequence is tRNA pseudouridine synthase A (268 aa).

The active-site Nucleophile is Asp-52. Tyr-110 lines the substrate pocket.

This sequence belongs to the tRNA pseudouridine synthase TruA family. As to quaternary structure, homodimer.

The catalysed reaction is uridine(38/39/40) in tRNA = pseudouridine(38/39/40) in tRNA. Functionally, formation of pseudouridine at positions 38, 39 and 40 in the anticodon stem and loop of transfer RNAs. The polypeptide is tRNA pseudouridine synthase A (Prochlorococcus marinus subsp. pastoris (strain CCMP1986 / NIES-2087 / MED4)).